A 150-amino-acid polypeptide reads, in one-letter code: MQIILLEKIGGLGNLGDIVTVKNGYARNFLIPAGKAKRATEANMKEFEARRAELEAKQAEILADARVRQEKLDGQTVTVAQKAGVDGRLFGSVTNADIAAAIVAAGIEAVKANVRLPNGPLKAVGEYEVEVALHTDAVAKITVAVVAATE.

Belongs to the bacterial ribosomal protein bL9 family.

Its function is as follows. Binds to the 23S rRNA. This chain is Large ribosomal subunit protein bL9, found in Neisseria meningitidis serogroup B (strain ATCC BAA-335 / MC58).